Reading from the N-terminus, the 347-residue chain is Protein RecA (347 aa).

67–74 contributes to the ATP binding site; the sequence is GPESSGKT.

The protein belongs to the RecA family.

The protein localises to the cytoplasm. Its function is as follows. Can catalyze the hydrolysis of ATP in the presence of single-stranded DNA, the ATP-dependent uptake of single-stranded DNA by duplex DNA, and the ATP-dependent hybridization of homologous single-stranded DNAs. It interacts with LexA causing its activation and leading to its autocatalytic cleavage. The polypeptide is Protein RecA (Helicobacter pylori (strain P12)).